The primary structure comprises 359 residues: Glycerol-1-phosphate dehydrogenase [NAD(P)+] (359 aa).

Residues 107–111 (GRVID) and 129–132 (TAAS) contribute to the NAD(+) site. A substrate-binding site is contributed by Asp134. Ser138 is an NAD(+) binding site. Asp181 contributes to the substrate binding site. Zn(2+) contacts are provided by Asp181 and His261. His265 is a substrate binding site. Position 277 (His277) interacts with Zn(2+).

It belongs to the glycerol-1-phosphate dehydrogenase family. The cofactor is Zn(2+).

It is found in the cytoplasm. It catalyses the reaction sn-glycerol 1-phosphate + NAD(+) = dihydroxyacetone phosphate + NADH + H(+). The enzyme catalyses sn-glycerol 1-phosphate + NADP(+) = dihydroxyacetone phosphate + NADPH + H(+). The protein operates within membrane lipid metabolism; glycerophospholipid metabolism. Functionally, catalyzes the NAD(P)H-dependent reduction of dihydroxyacetonephosphate (DHAP or glycerone phosphate) to glycerol 1-phosphate (G1P). The G1P thus generated is used as the glycerophosphate backbone of phospholipids in the cellular membranes of Archaea. The chain is Glycerol-1-phosphate dehydrogenase [NAD(P)+] from Methanospirillum hungatei JF-1 (strain ATCC 27890 / DSM 864 / NBRC 100397 / JF-1).